The following is a 457-amino-acid chain: Serine--tRNA ligase (457 aa).

Residue 252 to 254 (TAE) coordinates L-serine. ATP-binding positions include 283–285 (RKE) and Val299. Glu306 provides a ligand contact to L-serine. Residue 370–373 (EMVS) coordinates ATP. Thr406 provides a ligand contact to L-serine.

This sequence belongs to the class-II aminoacyl-tRNA synthetase family. Type-1 seryl-tRNA synthetase subfamily. As to quaternary structure, homodimer. The tRNA molecule binds across the dimer.

The protein resides in the cytoplasm. The catalysed reaction is tRNA(Ser) + L-serine + ATP = L-seryl-tRNA(Ser) + AMP + diphosphate + H(+). It carries out the reaction tRNA(Sec) + L-serine + ATP = L-seryl-tRNA(Sec) + AMP + diphosphate + H(+). The protein operates within aminoacyl-tRNA biosynthesis; selenocysteinyl-tRNA(Sec) biosynthesis; L-seryl-tRNA(Sec) from L-serine and tRNA(Sec): step 1/1. Functionally, catalyzes the attachment of serine to tRNA(Ser). Is also able to aminoacylate tRNA(Sec) with serine, to form the misacylated tRNA L-seryl-tRNA(Sec), which will be further converted into selenocysteinyl-tRNA(Sec). In Saccharolobus islandicus (strain Y.N.15.51 / Yellowstone #2) (Sulfolobus islandicus), this protein is Serine--tRNA ligase.